Here is a 295-residue protein sequence, read N- to C-terminus: Ribosomal RNA small subunit methyltransferase A (295 aa).

S-adenosyl-L-methionine contacts are provided by Asn31, Leu33, Gly58, Glu79, Asp104, and Asn129.

Belongs to the class I-like SAM-binding methyltransferase superfamily. rRNA adenine N(6)-methyltransferase family. RsmA subfamily.

The protein resides in the cytoplasm. The catalysed reaction is adenosine(1518)/adenosine(1519) in 16S rRNA + 4 S-adenosyl-L-methionine = N(6)-dimethyladenosine(1518)/N(6)-dimethyladenosine(1519) in 16S rRNA + 4 S-adenosyl-L-homocysteine + 4 H(+). Functionally, specifically dimethylates two adjacent adenosines (A1518 and A1519) in the loop of a conserved hairpin near the 3'-end of 16S rRNA in the 30S particle. May play a critical role in biogenesis of 30S subunits. In Leuconostoc mesenteroides subsp. mesenteroides (strain ATCC 8293 / DSM 20343 / BCRC 11652 / CCM 1803 / JCM 6124 / NCDO 523 / NBRC 100496 / NCIMB 8023 / NCTC 12954 / NRRL B-1118 / 37Y), this protein is Ribosomal RNA small subunit methyltransferase A.